Reading from the N-terminus, the 436-residue chain is MEPDDFDSEDKEILSWDINDVKLPQNVKKTDWFQEWPDSYAKHIYSSEDKNAQRHLSSWAMRNTNNHNSRILKKSCLGVVVCGRDCLAEEGRKIYLRPAICDKARQKQQRKRCPNCDGPLKLIPCRGHGGFPVTNFWRHDGRFIFFQSKGEHDHPKPETKLEAEARRAMKKVNTAPSSVSLSLKGSTETRSLPGETQSQGSLPLTWSFQEGVQLPGSYSGHLIANTPQQNSLNDCFSFSKSYGLGGITDLTDQTSTVDPMKLYEKRKLSSSRTYSSGDLLPPSASGVYSDHGDLQAWSKNAALGRNHLADNCYSNYPFPLTSWPCSFSPSQNSSEPFYQQLPLEPPAAKTGCPPLWPNPAGNLYEEKVHVDFNSYVQSPAYHSPQEDPFLFTYASHPHQQYSLPSKSSKWDFEEEMTYLGLDHCNNDMLLNLCPLR.

The GCM DNA-binding region spans 14 to 169 (LSWDINDVKL…KLEAEARRAM (156 aa)). Zn(2+) is bound by residues Cys-76, Cys-82, Cys-86, Cys-113, Cys-116, Cys-125, His-152, and His-154. A disordered region spans residues 171–202 (KVNTAPSSVSLSLKGSTETRSLPGETQSQGSL). Over residues 174–202 (TAPSSVSLSLKGSTETRSLPGETQSQGSL) the composition is skewed to polar residues.

In terms of processing, polyubiquitinated in the presence of UBE2D2 and FBXW2 (in vitro). In terms of tissue distribution, highly expressed in the placenta. Expressed in trophoblast cells of the villi.

It is found in the nucleus. In terms of biological role, transcription factor involved in the control of expression of placental growth factor (PGF) and other placenta-specific genes. Binds to the trophoblast-specific element 2 (TSE2) of the aromatase gene enhancer. Binds to the SYDE1 promoter. Has a central role in mediating the differentiation of trophoblast cells along both the villous and extravillous pathways in placental development. This Homo sapiens (Human) protein is Chorion-specific transcription factor GCMa (GCM1).